The sequence spans 353 residues: Chorismate synthase (353 aa).

The NADP(+) site is built by R48 and R54. FMN contacts are provided by residues R125 to S127, N238 to A239, G278, K293 to S297, and R319.

It belongs to the chorismate synthase family. Homotetramer. The cofactor is FMNH2.

The catalysed reaction is 5-O-(1-carboxyvinyl)-3-phosphoshikimate = chorismate + phosphate. Its pathway is metabolic intermediate biosynthesis; chorismate biosynthesis; chorismate from D-erythrose 4-phosphate and phosphoenolpyruvate: step 7/7. In terms of biological role, catalyzes the anti-1,4-elimination of the C-3 phosphate and the C-6 proR hydrogen from 5-enolpyruvylshikimate-3-phosphate (EPSP) to yield chorismate, which is the branch point compound that serves as the starting substrate for the three terminal pathways of aromatic amino acid biosynthesis. This reaction introduces a second double bond into the aromatic ring system. The chain is Chorismate synthase from Bordetella pertussis (strain Tohama I / ATCC BAA-589 / NCTC 13251).